We begin with the raw amino-acid sequence, 362 residues long: Chorismate synthase (362 aa).

NADP(+) is bound by residues arginine 48 and arginine 54. Residues 125–127, 238–239, glycine 278, 293–297, and arginine 319 each bind FMN; these read RSS, NA, and KPTSS.

This sequence belongs to the chorismate synthase family. As to quaternary structure, homotetramer. Requires FMNH2 as cofactor.

The enzyme catalyses 5-O-(1-carboxyvinyl)-3-phosphoshikimate = chorismate + phosphate. Its pathway is metabolic intermediate biosynthesis; chorismate biosynthesis; chorismate from D-erythrose 4-phosphate and phosphoenolpyruvate: step 7/7. Functionally, catalyzes the anti-1,4-elimination of the C-3 phosphate and the C-6 proR hydrogen from 5-enolpyruvylshikimate-3-phosphate (EPSP) to yield chorismate, which is the branch point compound that serves as the starting substrate for the three terminal pathways of aromatic amino acid biosynthesis. This reaction introduces a second double bond into the aromatic ring system. The sequence is that of Chorismate synthase from Aeromonas salmonicida (strain A449).